We begin with the raw amino-acid sequence, 178 residues long: Interleukin-10 (178 aa).

The first 18 residues, 1–18 (MHSSALLCFLVFLAGVGA), serve as a signal peptide directing secretion. Residue asparagine 29 is glycosylated (N-linked (GlcNAc...) asparagine). 2 disulfide bridges follow: cysteine 30/cysteine 126 and cysteine 80/cysteine 132. N-linked (GlcNAc...) asparagine glycosylation occurs at asparagine 134.

This sequence belongs to the IL-10 family. As to quaternary structure, homodimer. Interacts with IL10RA and IL10RB.

The protein localises to the secreted. Its function is as follows. Major immune regulatory cytokine that acts on many cells of the immune system where it has profound anti-inflammatory functions, limiting excessive tissue disruption caused by inflammation. Mechanistically, IL10 binds to its heterotetrameric receptor comprising IL10RA and IL10RB leading to JAK1 and STAT2-mediated phosphorylation of STAT3. In turn, STAT3 translocates to the nucleus where it drives expression of anti-inflammatory mediators. Targets antigen-presenting cells (APCs) such as macrophages and monocytes and inhibits their release of pro-inflammatory cytokines including granulocyte-macrophage colony-stimulating factor /GM-CSF, granulocyte colony-stimulating factor/G-CSF, IL-1 alpha, IL-1 beta, IL-6, IL-8 and TNF-alpha. Also interferes with antigen presentation by reducing the expression of MHC-class II and co-stimulatory molecules, thereby inhibiting their ability to induce T cell activation. In addition, controls the inflammatory response of macrophages by reprogramming essential metabolic pathways including mTOR signaling. The polypeptide is Interleukin-10 (IL10) (Felis catus (Cat)).